We begin with the raw amino-acid sequence, 751 residues long: MSFLISFDKSKKHPAHLQLANNLKIALALEYASKNLKPEVDNDNAAMELRNTKEPFLLFDANAILRYVMDDFEGQTSDKYQFALASLQNLLYHKELPQQHVEVLTNKAIENYLVELKEPLTTTDLILFANVYALNSSLVHSKFPELPSKVHNAVALAKKHVPRDSSSFKNIGAVKIQADLTVKPKDSEILPKPNERNILITSALPYVNNVPHLGNIIGSVLSADIFARYCKGRNYNALFICGTDEYGTATETKALEEGVTPRQLCDKYHKIHSDVYKWFQIGFDYFGRTTTDKQTEIAQHIFTKLNSNGYLEEQSMKQLYCPVHNSYLADRYVEGECPKCHYDDARGDQCDKCGALLDPFELINPRCKLDDASPEPKYSDHIFLSLDKLESQISEWVEKASEEGNWSKNSKTITQSWLKDGLKPRCITRDLVWGTPVPLEKYKDKVLYVWFDATIGYVSITSNYTKEWKQWWNNPEHVSLYQFMGKDNVPFHTVVFPGSQLGTEENWTMLHHLNTTEYLQYENGKFSKSRGVGVFGNNAQDSGISPSVWRYYLASVRPESSDSHFSWDDFVARNNSELLANLGNFVNRLIKFVNAKYNGVVPKFDPKKVSNYDGLVKDINEILSNYVKEMELGHERRGLEIAMSLSARGNQFLQENKLDNTLFSQSPEKSDAVVAVGLNIIYAVSSIITPYMPEIGEKINKMLNAPALKIDDRFHLAILEGHNINKAEYLFQRIDEKKIDEWRAKYGGQQV.

Residue S2 is modified to N-acetylserine. The segment at 36–92 is interaction with ARC1; sequence LKPEVDNDNAAMELRNTKEPFLLFDANAILRYVMDDFEGQTSDKYQFALASLQNLLY. The short motif at 205 to 215 is the 'HIGH' region element; sequence PYVNNVPHLGN. K411 provides a ligand contact to ATP. The 'KMSKS' region motif lies at 525–529; sequence KFSKS.

This sequence belongs to the class-I aminoacyl-tRNA synthetase family. In terms of assembly, component of a yeast aminoacyl-tRNA synthase (aaRS) complex formed by methionyl-tRNA synthase MES1, glutamyl-tRNA synthase GUS1 and the tRNA aminoacylation cofactor ARC1 in a stoichiometric complex. Interacts (via N-ter) with ARC1 (via N-ter). Can also form a stable binary complex with ARC1 that is functional in terms of aminoacylation. ARC1 increases the affinity for cognate tRNAs due to the presence of a tRNA binding domain in the middle and C-terminal part of ARC1.

It localises to the cytoplasm. The enzyme catalyses tRNA(Met) + L-methionine + ATP = L-methionyl-tRNA(Met) + AMP + diphosphate. Its function is as follows. Catalyzes the attachment of methionine to tRNA(Met) in a two-step reaction: methionine is first activated by ATP to form Met-AMP and then transferred to the acceptor end of tRNA(Met). In Saccharomyces cerevisiae (strain ATCC 204508 / S288c) (Baker's yeast), this protein is Methionine--tRNA ligase, cytoplasmic (MES1).